The following is a 640-amino-acid chain: Threonine--tRNA ligase (640 aa).

One can recognise a TGS domain in the interval 1-61; that stretch reads MPVITLPDGS…SNDATLQIIT (61 aa). The interval 242–533 is catalytic; the sequence is DHRKIGKQLD…LIEHYAGVFP (292 aa). Zn(2+)-binding residues include C333, H384, and H510.

Belongs to the class-II aminoacyl-tRNA synthetase family. As to quaternary structure, homodimer. It depends on Zn(2+) as a cofactor.

The protein resides in the cytoplasm. The enzyme catalyses tRNA(Thr) + L-threonine + ATP = L-threonyl-tRNA(Thr) + AMP + diphosphate + H(+). Catalyzes the attachment of threonine to tRNA(Thr) in a two-step reaction: L-threonine is first activated by ATP to form Thr-AMP and then transferred to the acceptor end of tRNA(Thr). Also edits incorrectly charged L-seryl-tRNA(Thr). The chain is Threonine--tRNA ligase from Pseudomonas putida (strain GB-1).